We begin with the raw amino-acid sequence, 499 residues long: Calcium/calmodulin-dependent protein kinase type II subunit delta (499 aa).

Position 2 is an N-acetylalanine (Ala-2). The Protein kinase domain maps to 14-272 (YQLFEELGKG…ASEALKHPWI (259 aa)). ATP contacts are provided by residues 20-28 (LGKGAFSVV) and Lys-43. Asp-136 (proton acceptor) is an active-site residue. The interval 283-292 (HRQETVDCLK) is autoinhibitory domain. Thr-287 is subject to Phosphothreonine; by autocatalysis. The tract at residues 291 to 301 (LKKFNARRKLK) is calmodulin-binding. 2 positions are modified to phosphothreonine; by autocatalysis: Thr-306 and Thr-307. Ser-315 is modified (phosphoserine). An N6-acetyllysine modification is found at Lys-318. Residues Ser-319 and Ser-330 each carry the phosphoserine modification. Position 331 is a phosphothreonine (Thr-331). Ser-333 carries the post-translational modification Phosphoserine. Thr-336 and Thr-337 each carry phosphothreonine. Phosphoserine occurs at positions 404, 490, and 494.

It belongs to the protein kinase superfamily. CAMK Ser/Thr protein kinase family. CaMK subfamily. CAMK2 is composed of 4 different chains: alpha (CAMK2A), beta (CAMK2B), gamma (CAMK2G), and delta (CAMK2D). The different isoforms assemble into homo- or heteromultimeric holoenzymes composed of 12 subunits with two hexameric rings stacked one on top of the other. Interacts with RRAD CACNB2. Autophosphorylation of Thr-287 following activation by Ca(2+)/calmodulin. Phosphorylation of Thr-287 locks the kinase into an activated state.

The protein resides in the cell membrane. The protein localises to the sarcolemma. It localises to the sarcoplasmic reticulum membrane. It catalyses the reaction L-seryl-[protein] + ATP = O-phospho-L-seryl-[protein] + ADP + H(+). It carries out the reaction L-threonyl-[protein] + ATP = O-phospho-L-threonyl-[protein] + ADP + H(+). With respect to regulation, activated by Ca(2+)/calmodulin. Binding of calmodulin results in conformational change that relieves intrasteric autoinhibition and allows autophosphorylation of Thr-287 which turns the kinase in a constitutively active form and confers to the kinase a Ca(2+)-independent activity. In terms of biological role, calcium/calmodulin-dependent protein kinase involved in the regulation of Ca(2+) homeostatis and excitation-contraction coupling (ECC) in heart by targeting ion channels, transporters and accessory proteins involved in Ca(2+) influx into the myocyte, Ca(2+) release from the sarcoplasmic reticulum (SR), SR Ca(2+) uptake and Na(+) and K(+) channel transport. Targets also transcription factors and signaling molecules to regulate heart function. In its activated form, is involved in the pathogenesis of dilated cardiomyopathy and heart failure. Contributes to cardiac decompensation and heart failure by regulating SR Ca(2+) release via direct phosphorylation of RYR2 Ca(2+) channel on 'Ser-2808'. In the nucleus, phosphorylates the MEF2 repressor HDAC4, promoting its nuclear export and binding to 14-3-3 protein, and expression of MEF2 and genes involved in the hypertrophic program. Is essential for left ventricular remodeling responses to myocardial infarction. In pathological myocardial remodeling acts downstream of the beta adrenergic receptor signaling cascade to regulate key proteins involved in ECC. Regulates Ca(2+) influx to myocytes by binding and phosphorylating the L-type Ca(2+) channel subunit beta-2 CACNB2. In addition to Ca(2+) channels, can target and regulate the cardiac sarcolemmal Na(+) channel Nav1.5/SCN5A and the K+ channel Kv4.3/KCND3, which contribute to arrhythmogenesis in heart failure. Phosphorylates phospholamban (PLN/PLB), an endogenous inhibitor of SERCA2A/ATP2A2, contributing to the enhancement of SR Ca(2+) uptake that may be important in frequency-dependent acceleration of relaxation (FDAR) and maintenance of contractile function during acidosis. May participate in the modulation of skeletal muscle function in response to exercise, by regulating SR Ca(2+) transport through phosphorylation of PLN/PLB and triadin, a ryanodine receptor-coupling factor. In response to interferon-gamma (IFN-gamma) stimulation, catalyzes phosphorylation of STAT1, stimulating the JAK-STAT signaling pathway. In Sus scrofa (Pig), this protein is Calcium/calmodulin-dependent protein kinase type II subunit delta (CAMK2D).